The sequence spans 38 residues: Large ribosomal subunit protein bL36 (38 aa).

The protein belongs to the bacterial ribosomal protein bL36 family.

In Lactobacillus johnsonii (strain CNCM I-12250 / La1 / NCC 533), this protein is Large ribosomal subunit protein bL36.